A 314-amino-acid polypeptide reads, in one-letter code: Methionyl-tRNA formyltransferase (314 aa).

110–113 (SLLP) lines the (6S)-5,6,7,8-tetrahydrofolate pocket.

It belongs to the Fmt family.

It carries out the reaction L-methionyl-tRNA(fMet) + (6R)-10-formyltetrahydrofolate = N-formyl-L-methionyl-tRNA(fMet) + (6S)-5,6,7,8-tetrahydrofolate + H(+). In terms of biological role, attaches a formyl group to the free amino group of methionyl-tRNA(fMet). The formyl group appears to play a dual role in the initiator identity of N-formylmethionyl-tRNA by promoting its recognition by IF2 and preventing the misappropriation of this tRNA by the elongation apparatus. This is Methionyl-tRNA formyltransferase from Lactobacillus johnsonii (strain CNCM I-12250 / La1 / NCC 533).